Consider the following 628-residue polypeptide: tRNA uridine 5-carboxymethylaminomethyl modification enzyme MnmG (628 aa).

Residue 13-18 (GAGHAG) participates in FAD binding. An NAD(+)-binding site is contributed by 273–287 (GPRYCPSIEDKIVRF).

It belongs to the MnmG family. As to quaternary structure, homodimer. Heterotetramer of two MnmE and two MnmG subunits. FAD serves as cofactor.

It localises to the cytoplasm. Functionally, NAD-binding protein involved in the addition of a carboxymethylaminomethyl (cmnm) group at the wobble position (U34) of certain tRNAs, forming tRNA-cmnm(5)s(2)U34. The chain is tRNA uridine 5-carboxymethylaminomethyl modification enzyme MnmG from Buchnera aphidicola subsp. Acyrthosiphon pisum (strain 5A).